The chain runs to 305 residues: NAD kinase (305 aa).

The active-site Proton acceptor is the Asp-76. NAD(+) is bound by residues 76–77 (DG), 150–151 (ND), Arg-161, and Asp-180.

It belongs to the NAD kinase family. It depends on a divalent metal cation as a cofactor.

It is found in the cytoplasm. The enzyme catalyses NAD(+) + ATP = ADP + NADP(+) + H(+). Involved in the regulation of the intracellular balance of NAD and NADP, and is a key enzyme in the biosynthesis of NADP. Catalyzes specifically the phosphorylation on 2'-hydroxyl of the adenosine moiety of NAD to yield NADP. The sequence is that of NAD kinase from Treponema pallidum (strain Nichols).